The following is a 96-amino-acid chain: Co-chaperonin GroES (96 aa).

Belongs to the GroES chaperonin family. In terms of assembly, heptamer of 7 subunits arranged in a ring. Interacts with the chaperonin GroEL.

The protein localises to the cytoplasm. Together with the chaperonin GroEL, plays an essential role in assisting protein folding. The GroEL-GroES system forms a nano-cage that allows encapsulation of the non-native substrate proteins and provides a physical environment optimized to promote and accelerate protein folding. GroES binds to the apical surface of the GroEL ring, thereby capping the opening of the GroEL channel. The polypeptide is Co-chaperonin GroES (Chromohalobacter salexigens (strain ATCC BAA-138 / DSM 3043 / CIP 106854 / NCIMB 13768 / 1H11)).